Consider the following 337-residue polypeptide: Fructose-1,6-bisphosphatase class 1 (337 aa).

Glu-94, Asp-116, Leu-118, and Asp-119 together coordinate Mg(2+). Residues 119–122 (DGSS), Asn-210, and Lys-276 each bind substrate. Glu-282 contributes to the Mg(2+) binding site.

The protein belongs to the FBPase class 1 family. In terms of assembly, homotetramer. It depends on Mg(2+) as a cofactor.

It localises to the cytoplasm. It carries out the reaction beta-D-fructose 1,6-bisphosphate + H2O = beta-D-fructose 6-phosphate + phosphate. The protein operates within carbohydrate biosynthesis; gluconeogenesis. The chain is Fructose-1,6-bisphosphatase class 1 from Burkholderia orbicola (strain MC0-3).